The primary structure comprises 454 residues: uncharacterized protein (454 aa).

The protein belongs to the outer membrane factor (OMF) (TC 1.B.17) family.

This is an uncharacterized protein from Haemophilus influenzae (strain ATCC 51907 / DSM 11121 / KW20 / Rd).